Reading from the N-terminus, the 321-residue chain is MNNNYTSLKSSIDEEGELKTDHEIDLEKGLLPEYNSEEEGALPTYSDHARSSNPPNTHRENHSSGTTDDSSPFLIKLLISFTPIVLLNALAVCYLTYKDAFFKDYGAAEWTLFGFWCLVCTLALIILTYFYETWTKAVKVTAIGLFNIRREMMIIIWILWLIICCILFGCVKDGRLNLNKALIYSTCTISAVLFLIVSSVCIPMWTLWRALSGMLQVLGIHGIIALLVNGSMSLFGKHFGWRGYEIEGFVLFFTGNALFLYEMERPGVLKRMRNTTGNVIGYILEGIGNIGNAIGRIGNAFRGANDNNDIPLGEMEVESEV.

Residues 29 to 68 form a disordered region; sequence GLLPEYNSEEEGALPTYSDHARSSNPPNTHRENHSSGTTD. Transmembrane regions (helical) follow at residues 73–93, 110–130, 151–171, 188–208, 210–230, and 243–263; these read FLIKLLISFTPIVLLNALAVC, WTLFGFWCLVCTLALIILTYF, EMMIIIWILWLIICCILFGCV, TISAVLFLIVSSVCIPMWTLW, ALSGMLQVLGIHGIIALLVNG, and GYEIEGFVLFFTGNALFLYEM.

Belongs to the WTF family. In terms of assembly, homomer. Interacts with other proteins that exhibit high sequence similarity.

It localises to the spore membrane. The protein resides in the vacuole membrane. Its function is as follows. Acts as a suppressor component of the dual wtf meiotic drive system, and can suppress but not confer meiotic drive by compatible poisons. Wtf meiotic drive systems promote unequal transmission of alleles from the parental zygote to progeny spores by encoding a poison and an antidote from the same locus; the poison is trans-acting and forms toxic aggregates in all spores within an ascus, wherease the antidote is spore-specific and targets aggregates for degradation by the vacuole. Meiotic drive by wtf systems therefore lead to poisoning of all progeny that do not inherit the dual poison/antidote allele, or express a compatible antidote. The sequence is that of Meiotic drive suppressor wtf26 from Schizosaccharomyces kambucha (Fission yeast).